Here is a 158-residue protein sequence, read N- to C-terminus: Ribosome maturation factor RimP (158 aa).

The protein belongs to the RimP family.

It localises to the cytoplasm. In terms of biological role, required for maturation of 30S ribosomal subunits. This Streptococcus uberis (strain ATCC BAA-854 / 0140J) protein is Ribosome maturation factor RimP.